The following is a 461-amino-acid chain: Argininosuccinate lyase (461 aa).

It belongs to the lyase 1 family. Argininosuccinate lyase subfamily.

It localises to the cytoplasm. It carries out the reaction 2-(N(omega)-L-arginino)succinate = fumarate + L-arginine. It participates in amino-acid biosynthesis; L-arginine biosynthesis; L-arginine from L-ornithine and carbamoyl phosphate: step 3/3. The chain is Argininosuccinate lyase from Bacillus subtilis (strain 168).